An 855-amino-acid polypeptide reads, in one-letter code: Discoidin domain-containing receptor 2 (855 aa).

Residues Met-1–Ala-21 form the signal peptide. The Extracellular segment spans residues Lys-22–Arg-399. Positions Cys-30–Cys-185 constitute an F5/8 type C domain. 2 disulfides stabilise this stretch: Cys-30–Cys-185 and Cys-73–Cys-177. Asn-121, Asn-213, Asn-261, Asn-280, and Asn-372 each carry an N-linked (GlcNAc...) asparagine glycan. A helical membrane pass occupies residues Ile-400–Trp-421. The Cytoplasmic segment spans residues Arg-422 to Glu-855. Residues Ser-452–Tyr-471 are disordered. Tyr-471 is subject to Phosphotyrosine; by SRC and autocatalysis. The Protein kinase domain maps to Leu-563–Leu-849. ATP is bound by residues Leu-569–Val-577 and Lys-608. Asp-710 functions as the Proton acceptor in the catalytic mechanism. Residues Tyr-736, Tyr-740, and Tyr-741 each carry the phosphotyrosine; by SRC and autocatalysis modification.

It belongs to the protein kinase superfamily. Tyr protein kinase family. Insulin receptor subfamily. Binds hydroxyproline-rich sequence motifs in fibrillar, glycosylated collagen, such as the GQOGVMGFO motif, where O stands for hydroxyproline. Interacts with SRC. Interacts (tyrosine phosphorylated) with SHC1. Post-translationally, N-glycosylated. In terms of processing, tyrosine phosphorylated in response to collagen binding. Phosphorylated by SRC; this is required for activation and subsequent autophosphorylation on additional tyrosine residues. Detected in osteocytes, osteoblastic cells in subchondral bone, bone lining cells, tibia and cartilage (at protein level). Detected at high levels in heart and lung, and at low levels in brain, placenta, liver, skeletal muscle, pancreas, and kidney.

The protein localises to the cell membrane. The catalysed reaction is L-tyrosyl-[protein] + ATP = O-phospho-L-tyrosyl-[protein] + ADP + H(+). Present in an inactive state in the absence of collagen binding and phosphorylation by SRC. Tyrosine phosphorylation enhances the affinity for ATP and the catalytic activity. In terms of biological role, tyrosine kinase involved in the regulation of tissues remodeling. It functions as a cell surface receptor for fibrillar collagen and regulates cell differentiation, remodeling of the extracellular matrix, cell migration and cell proliferation. Required for normal bone development. Regulates osteoblast differentiation and chondrocyte maturation via a signaling pathway that involves MAP kinases and leads to the activation of the transcription factor RUNX2. Regulates remodeling of the extracellular matrix by up-regulation of the collagenases MMP1, MMP2 and MMP13, and thereby facilitates cell migration and tumor cell invasion. Promotes fibroblast migration and proliferation, and thereby contributes to cutaneous wound healing. The polypeptide is Discoidin domain-containing receptor 2 (DDR2) (Homo sapiens (Human)).